The primary structure comprises 471 residues: Collagenase 3 (471 aa).

The first 19 residues, M1–A19, serve as a signal peptide directing secretion. A propeptide spans L20–E103 (activation peptide). The Cysteine switch signature appears at P94–V101. C96 provides a ligand contact to Zn(2+). N-linked (GlcNAc...) asparagine glycosylation is present at N117. Residue D128 participates in Ca(2+) binding. N-linked (GlcNAc...) asparagine glycosylation is present at N152. D162 contributes to the Ca(2+) binding site. Residues H172 and D174 each contribute to the Zn(2+) site. The segment at Y176–Y246 is interaction with TIMP2. Ca(2+)-binding residues include D179, G180, S182, and L184. H187 serves as a coordination point for Zn(2+). Positions 194, 196, and 198 each coordinate Ca(2+). H200 provides a ligand contact to Zn(2+). Residues D202, D203, and E205 each contribute to the Ca(2+) site. H222 contacts Zn(2+). The active site involves E223. Zn(2+)-binding residues include H226, H232, and M240. A disordered region spans residues Q263 to C284. Residues P268–C471 are interaction with collagen. Basic and acidic residues predominate over residues P273–C284. 4 Hemopexin repeats span residues P281–L330, P331–K377, V379–I427, and G428–C471. C284 and C471 are disulfide-bonded. The Ca(2+) site is built by D291, I293, D335, and A337. Y366 carries the post-translational modification Phosphotyrosine; by PKDCC. S383, A385, D432, and V434 together coordinate Ca(2+).

Belongs to the peptidase M10A family. Monomer. Interacts with TIMP1, TIMP2 and TIMP3. Binds (via the C-terminal region) to collagen. It depends on Ca(2+) as a cofactor. Zn(2+) serves as cofactor. Post-translationally, the proenzyme is activated by removal of the propeptide; this cleavage can be effected by other matrix metalloproteinases, such as MMP2, MMP3 and MMP14 and may involve several cleavage steps. Cleavage can also be autocatalytic, after partial maturation by another protease or after treatment with 4-aminophenylmercuric acetate (APMA) (in vitro). N-glycosylated. In terms of processing, tyrosine phosphorylated by PKDCC/VLK. Detected in fetal cartilage and calvaria, in chondrocytes of hypertrophic cartilage in vertebrae and in the dorsal end of ribs undergoing ossification, as well as in osteoblasts and periosteal cells below the inner periosteal region of ossified ribs. Detected in chondrocytes from in joint cartilage that have been treated with TNF and IL1B, but not in untreated chondrocytes. Detected in T lymphocytes. Detected in breast carcinoma tissue.

The protein resides in the secreted. It localises to the extracellular space. The protein localises to the extracellular matrix. Inhibited by TIMP1, TIMP2 and TIMP3. Inhibited by acetohydroxamic acid and other zinc chelators. Its function is as follows. Plays a role in the degradation of extracellular matrix proteins including fibrillar collagen, fibronectin, TNC and ACAN. Cleaves triple helical collagens, including type I, type II and type III collagen, but has the highest activity with soluble type II collagen. Can also degrade collagen type IV, type XIV and type X. May also function by activating or degrading key regulatory proteins, such as TGFB1 and CCN2. Plays a role in wound healing, tissue remodeling, cartilage degradation, bone development, bone mineralization and ossification. Required for normal embryonic bone development and ossification. Plays a role in the healing of bone fractures via endochondral ossification. Plays a role in wound healing, probably by a mechanism that involves proteolytic activation of TGFB1 and degradation of CCN2. Plays a role in keratinocyte migration during wound healing. May play a role in cell migration and in tumor cell invasion. In Homo sapiens (Human), this protein is Collagenase 3 (MMP13).